The following is a 341-amino-acid chain: Methionine import ATP-binding protein MetN 1 (341 aa).

One can recognise an ABC transporter domain in the interval 2-241 (IEFRQVSKSF…PKTTIAQNFV (240 aa)). Residue 38 to 45 (GYSGAGKS) participates in ATP binding.

This sequence belongs to the ABC transporter superfamily. Methionine importer (TC 3.A.1.24) family. The complex is composed of two ATP-binding proteins (MetN), two transmembrane proteins (MetI) and a solute-binding protein (MetQ).

It localises to the cell membrane. The enzyme catalyses L-methionine(out) + ATP + H2O = L-methionine(in) + ADP + phosphate + H(+). It catalyses the reaction D-methionine(out) + ATP + H2O = D-methionine(in) + ADP + phosphate + H(+). In terms of biological role, part of the ABC transporter complex MetNIQ involved in methionine import. Responsible for energy coupling to the transport system. The chain is Methionine import ATP-binding protein MetN 1 from Staphylococcus aureus (strain Mu50 / ATCC 700699).